Here is a 656-residue protein sequence, read N- to C-terminus: MSKPLLEVSACYRSFQAGEQQLTVLKDINLSIARGEMVAIVGASGSGKSTLMNILGCLDKPSKGSYFIDGQDTSQMDVDELAKLRREHFGFIFQRYHLLGDLNAVGNVEVPAVYAGKDRLERRERAESLLSRLGLGERLDHKPNQLSGGQQQRVSVARALMNGGDVILADEPTGALDSHSGEEMMRLLQELHREGQTIIIVTHDMHVAQHADRIIEIKDGVIISDEPNPASNIAAAPKTEVIPAKTKARARVAAWDRYAEALKMALLAMSTHRLRTFLTMLGIIIGIASVVSVVALGEGSQREILKSISSMGTNTIDIRPGSGFGDRRSARVRTLTASDANALKNLPYVDSVTPSIGSSATVRYGNKAVTATVNGVGPEFFRVRGYELAQGQFWDDDSVNALAQDAVIDENTRKQLFPNSSGAMNSAIGEVIFLGDLPVRIIGVTQPKESAFGNSDALNVWVPYTTVSGRMVGKKYLDGITVRLDESVPSNAAEQGIISLLKMRHGTQDFFTINTDTIRQNIEKTTATMTLLISAIAVISLVVGGIGVMNIMLVSVTERTREIGVRMAVGARQSDILRQFLIEAVLVCLCGGALGVALAYLIGVVFAQAGGSFQMIYSTTSIVAAFACSTLIGVLFGFLPARNAARLDPVDALARE.

The ABC transporter domain maps to 6 to 244; it reads LEVSACYRSF…AAPKTEVIPA (239 aa). 42–49 serves as a coordination point for ATP; it reads GASGSGKS. The next 4 membrane-spanning stretches (helical) occupy residues 277 to 297, 531 to 551, 586 to 606, and 621 to 641; these read FLTM…VALG, LLIS…VMNI, LVCL…GVVF, and SIVA…FLPA.

This sequence belongs to the ABC transporter superfamily. Macrolide exporter (TC 3.A.1.122) family. Homodimer. Part of the tripartite efflux system MacAB-TolC, which is composed of an inner membrane transporter, MacB, a periplasmic membrane fusion protein, MacA, and an outer membrane component, TolC. The complex forms a large protein conduit and can translocate molecules across both the inner and outer membranes. Interacts with MacA.

It is found in the cell inner membrane. Part of the tripartite efflux system MacAB-TolC. MacB is a non-canonical ABC transporter that contains transmembrane domains (TMD), which form a pore in the inner membrane, and an ATP-binding domain (NBD), which is responsible for energy generation. Confers resistance against macrolides. This chain is Macrolide export ATP-binding/permease protein MacB, found in Shewanella sp. (strain ANA-3).